A 98-amino-acid chain; its full sequence is NADH-ubiquinone oxidoreductase chain 4L (98 aa).

The next 3 membrane-spanning stretches (helical) occupy residues 1–21 (MSLVHMNIGLAFTVAFLGLLM), 29–49 (SLLCLEGMMLTLFIMSSIMVL), and 61–81 (IILLVFAACEAAVGLSLLVMV).

The protein belongs to the complex I subunit 4L family. In terms of assembly, core subunit of respiratory chain NADH dehydrogenase (Complex I) which is composed of 45 different subunits.

It localises to the mitochondrion inner membrane. The enzyme catalyses a ubiquinone + NADH + 5 H(+)(in) = a ubiquinol + NAD(+) + 4 H(+)(out). Core subunit of the mitochondrial membrane respiratory chain NADH dehydrogenase (Complex I) which catalyzes electron transfer from NADH through the respiratory chain, using ubiquinone as an electron acceptor. Part of the enzyme membrane arm which is embedded in the lipid bilayer and involved in proton translocation. This chain is NADH-ubiquinone oxidoreductase chain 4L (MT-ND4L), found in Pseudosoriculus fumidus (Taiwanese brown-toothed shrew).